Reading from the N-terminus, the 324-residue chain is D-erythronate dehydrogenase (324 aa).

Residues S125, Y149, and K153 each coordinate NAD(+). Catalysis depends on Y149, which acts as the Proton acceptor.

The protein belongs to the NAD(P)-dependent epimerase/dehydratase family.

The enzyme catalyses D-erythronate + NAD(+) = 2-dehydro-D-erythronate + NADH + H(+). Functionally, catalyzes oxidation of D-erythronate to 2-oxo-tetronate. Can use either NAD(+) or NADP(+) as cosubstrate, with a preference for NAD(+). The protein is D-erythronate dehydrogenase of Cupriavidus necator (strain ATCC 17699 / DSM 428 / KCTC 22496 / NCIMB 10442 / H16 / Stanier 337) (Ralstonia eutropha).